We begin with the raw amino-acid sequence, 616 residues long: Chaperone protein HscA homolog (616 aa).

The protein belongs to the heat shock protein 70 family.

In terms of biological role, chaperone involved in the maturation of iron-sulfur cluster-containing proteins. Has a low intrinsic ATPase activity which is markedly stimulated by HscB. The protein is Chaperone protein HscA homolog of Histophilus somni (strain 129Pt) (Haemophilus somnus).